Consider the following 579-residue polypeptide: Acyl-coenzyme A synthetase ACSM5, mitochondrial (579 aa).

The transit peptide at 1–26 directs the protein to the mitochondrion; it reads MRPWLRHLVLQALRNSRAFCGSHGKP. Lys-97 is modified (N6-acetyllysine; alternate). The residue at position 97 (Lys-97) is an N6-succinyllysine; alternate. Lys-152 is modified (N6-acetyllysine). Residue 230–238 participates in ATP binding; sequence TSGTTGAPK. Lys-303 is subject to N6-acetyllysine; alternate. Position 303 is an N6-succinyllysine; alternate (Lys-303). ATP contacts are provided by residues 368–373, Asp-455, Arg-470, and Lys-566; that span reads EGYGQS.

The protein belongs to the ATP-dependent AMP-binding enzyme family. Mg(2+) serves as cofactor. Requires Mn(2+) as cofactor. As to expression, detected in kidney and liver.

Its subcellular location is the mitochondrion matrix. The enzyme catalyses a medium-chain fatty acid + ATP + CoA = a medium-chain fatty acyl-CoA + AMP + diphosphate. In terms of biological role, catalyzes the activation of fatty acids by CoA to produce an acyl-CoA, the first step in fatty acid metabolism. This is Acyl-coenzyme A synthetase ACSM5, mitochondrial (ACSM5) from Homo sapiens (Human).